The following is a 255-amino-acid chain: DASH complex subunit SPC34 (255 aa).

Residues 53–81 (LFSVPPPPPRQTTLTAEQQQQQKPSNRRQ) are disordered. Polar residues predominate over residues 63–81 (QTTLTAEQQQQQKPSNRRQ). Positions 176-248 (LAYYEAKIAE…QARLRALDAD (73 aa)) form a coiled coil.

The protein belongs to the DASH complex SPC34 family. Component of the DASH complex consisting of ASK1, DAD1, DAD2, DAD3, DAD4, DAM1, DUO1, HSK3, SPC19 and SPC34, with a stoichiometry of one copy of each subunit per complex. Multiple DASH complexes oligomerize to form a ring that encircles spindle microtubules and organizes the rod-like NDC80 complexes of the outer kinetochore of the outer kinetochore. DASH complex oligomerization strengthens microtubule attachments. On cytoplasmic microtubules, DASH complexes appear to form patches instead of rings.

The protein localises to the nucleus. It is found in the cytoplasm. It localises to the cytoskeleton. Its subcellular location is the spindle. The protein resides in the chromosome. The protein localises to the centromere. It is found in the kinetochore. Its function is as follows. Component of the DASH complex that connects microtubules with kinetochores and couples microtubule depolymerisation to chromosome movement; it is involved in retrieving kinetochores to the spindle poles before their re-orientation on the spindle in early mitosis and allows microtubule depolymerization to pull chromosomes apart and resist detachment during anaphase. Kinetochores, consisting of a centromere-associated inner segment and a microtubule-contacting outer segment, play a crucial role in chromosome segregation by mediating the physical connection between centromeric DNA and microtubules. Kinetochores also serve as an input point for the spindle assembly checkpoint, which delays anaphase until all chromosomes have bioriented on the mitotic spindle. This Chaetomium thermophilum (strain DSM 1495 / CBS 144.50 / IMI 039719) (Thermochaetoides thermophila) protein is DASH complex subunit SPC34.